Here is a 163-residue protein sequence, read N- to C-terminus: Bacterial microcompartment assembly protein PduM (163 aa).

The protein belongs to the PduM family. Interacts with shell protein PduK.

Its subcellular location is the bacterial microcompartment. Its pathway is polyol metabolism; 1,2-propanediol degradation. Plays an essential role in assembly and/or stability of the bacterial microcompartment (BMC) dedicated to 1,2-propanediol (1,2-PD) degradation. Overexpression impairs BMC formation. Functionally, the 1,2-PD-specific bacterial microcompartment (BMC) concentrates low levels of 1,2-PD catabolic enzymes, concentrates volatile reaction intermediates thus enhancing pathway flux and keeps the level of toxic, mutagenic propionaldehyde low. The protein is Bacterial microcompartment assembly protein PduM of Salmonella typhimurium (strain LT2 / SGSC1412 / ATCC 700720).